Here is a 348-residue protein sequence, read N- to C-terminus: uncharacterized protein (348 aa).

WD repeat units follow at residues 59 to 98, 142 to 182, 185 to 226, 229 to 267, 270 to 309, and 312 to 347; these read GFQG…VVYS, GHTD…LIQT, DNLG…LLGT, QQPG…ELFS, GPSL…QVTT, and GHQG…SALA.

This is an uncharacterized protein from Synechocystis sp. (strain ATCC 27184 / PCC 6803 / Kazusa).